Consider the following 158-residue polypeptide: 6,7-dimethyl-8-ribityllumazine synthase (158 aa).

5-amino-6-(D-ribitylamino)uracil contacts are provided by residues Phe-22, 57 to 59, and 81 to 83; these read AYE and AVI. A (2S)-2-hydroxy-3-oxobutyl phosphate-binding site is contributed by 86–87; it reads GT. Residue His-89 is the Proton donor of the active site. Phe-114 is a 5-amino-6-(D-ribitylamino)uracil binding site. Arg-128 contributes to the (2S)-2-hydroxy-3-oxobutyl phosphate binding site.

Belongs to the DMRL synthase family. In terms of assembly, forms an icosahedral capsid composed of 60 subunits, arranged as a dodecamer of pentamers.

The enzyme catalyses (2S)-2-hydroxy-3-oxobutyl phosphate + 5-amino-6-(D-ribitylamino)uracil = 6,7-dimethyl-8-(1-D-ribityl)lumazine + phosphate + 2 H2O + H(+). Its pathway is cofactor biosynthesis; riboflavin biosynthesis; riboflavin from 2-hydroxy-3-oxobutyl phosphate and 5-amino-6-(D-ribitylamino)uracil: step 1/2. In terms of biological role, catalyzes the formation of 6,7-dimethyl-8-ribityllumazine by condensation of 5-amino-6-(D-ribitylamino)uracil with 3,4-dihydroxy-2-butanone 4-phosphate. This is the penultimate step in the biosynthesis of riboflavin. This chain is 6,7-dimethyl-8-ribityllumazine synthase, found in Pseudoalteromonas atlantica (strain T6c / ATCC BAA-1087).